The chain runs to 1669 residues: Dystrophin, isoform B (1669 aa).

Pro residues predominate over residues 1 to 11 (MTAKPPPPIPP). 5 disordered regions span residues 1 to 28 (MTAK…LAPE), 43 to 243 (RGQQ…SEDA), 327 to 356 (RAQA…RSTI), 389 to 417 (GGGG…MPLS), and 481 to 508 (SGAL…NSSG). A compositionally biased stretch (polar residues) spans 53–62 (SQEQHATNTL). The segment covering 118–131 (GLPPTMRQPPPLPR) has biased composition (pro residues). Low complexity predominate over residues 132–147 (KPASTQSSAQNSAQSS). Residues 153 to 166 (KFKDKPPPPPEKHS) are compositionally biased toward basic and acidic residues. Composition is skewed to low complexity over residues 328–347 (AQAQ…SNSQ) and 396–405 (STGNAVANSG). The segment covering 485-500 (SREELRMRRRSSHDET) has biased composition (basic and acidic residues). 4 Spectrin repeats span residues 541 to 643 (QRFE…KQLH), 650 to 747 (QSFD…NRLE), 754 to 883 (NALL…HRLD), and 890 to 990 (RQFQ…KVLC). Residues 827 to 851 (VSDTSDTEANHDSDSRYMSAEEQSR) form a disordered region. A disordered region spans residues 994-1024 (AQQTHENGDDGRTTSNSGTIGPLPNLGQSVK). Residues 1021 to 1054 (QSVKPPWERATTAANVPYYIDHERETTHWDHPEM) form the WW domain. Residues 1279 to 1335 (KHQAKCNICKEYPIVGFRYRCLKCFNFDMCQKCFFFGRNAKNHKLTHPMHEYCTTTT) form a ZZ-type zinc finger. 8 residues coordinate Zn(2+): Cys-1284, Cys-1287, Cys-1299, Cys-1302, Cys-1308, Cys-1311, His-1321, and His-1325. Phosphoserine is present on Ser-1379. Disordered regions lie at residues 1488-1516 (EQSG…GEQG) and 1559-1669 (DEPN…ELQK). 2 stretches are compositionally biased toward polar residues: residues 1497–1509 (NGMQ…MTGL) and 1580–1611 (ALNS…QQNG). Over residues 1630-1641 (QELESINDDLED) the composition is skewed to acidic residues. The segment covering 1642-1660 (SSSSNTTNTTTTTTTTATT) has biased composition (low complexity).

Component of the dystrophin associated protein complex (DAPC). Interacts with Dg, via the Dg WW domain binding sites. Expressed in neuronally derived tissues, mainly the CNS and the brain of stage 16 embryos. Lower level expression is seen in the sensory organs. Expression is absent from the musculature. In larvae, expression is predominant throughout the neuropil and brain and in the eye antennal disks.

The protein localises to the cell membrane. It localises to the sarcolemma. It is found in the cytoplasm. The protein resides in the cytoskeleton. Functionally, required for the maintenance of appropriate synaptic retrograde communication and the stabilization of muscle cell architecture or physiology. May play a role in anchoring the cytoskeleton to the plasma membrane. The protein is Dystrophin, isoform B (Dys) of Drosophila melanogaster (Fruit fly).